A 382-amino-acid chain; its full sequence is FK506-binding protein 4 (382 aa).

The segment at Gly-139–Lys-274 is disordered. Residues Glu-141–Pro-173 show a composition bias toward acidic residues. Composition is skewed to basic and acidic residues over residues Arg-180–Ser-190 and Glu-196–Lys-270. In terms of domain architecture, PPIase FKBP-type spans Gly-295–Lys-382.

Belongs to the FKBP-type PPIase family. FKBP3/4 subfamily. Binds to histones H3 and H4.

It is found in the nucleus. The enzyme catalyses [protein]-peptidylproline (omega=180) = [protein]-peptidylproline (omega=0). Its activity is regulated as follows. Inhibited by both FK506 and rapamycin. PPIase that acts as a histone chaperone. Histone proline isomerase that increases the rate of cis-trans isomerization at prolines on the histone H3 N-terminal tail. Proline isomerization influences H3 methylation thereby regulating gene expression. In Rhizopus delemar (strain RA 99-880 / ATCC MYA-4621 / FGSC 9543 / NRRL 43880) (Mucormycosis agent), this protein is FK506-binding protein 4 (FKBP4).